The following is a 429-amino-acid chain: Glutamyl-tRNA reductase (429 aa).

Substrate is bound by residues 52-55 (TCNR), Ser110, 115-117 (EAQ), and Gln121. Cys53 serves as the catalytic Nucleophile. 190 to 195 (GAGAMI) contributes to the NADP(+) binding site.

This sequence belongs to the glutamyl-tRNA reductase family. Homodimer.

It catalyses the reaction (S)-4-amino-5-oxopentanoate + tRNA(Glu) + NADP(+) = L-glutamyl-tRNA(Glu) + NADPH + H(+). Its pathway is porphyrin-containing compound metabolism; protoporphyrin-IX biosynthesis; 5-aminolevulinate from L-glutamyl-tRNA(Glu): step 1/2. Its function is as follows. Catalyzes the NADPH-dependent reduction of glutamyl-tRNA(Glu) to glutamate 1-semialdehyde (GSA). This Verminephrobacter eiseniae (strain EF01-2) protein is Glutamyl-tRNA reductase.